Here is a 242-residue protein sequence, read N- to C-terminus: UPF0309 protein BAbS19_II03080 (242 aa).

Residues 30-214 form the SIS domain; it reads AADLIAAAAR…ARLVGEGDAP (185 aa).

This sequence belongs to the UPF0309 family.

The sequence is that of UPF0309 protein BAbS19_II03080 from Brucella abortus (strain S19).